A 174-amino-acid chain; its full sequence is Endoribonuclease YbeY (174 aa).

Zn(2+)-binding residues include histidine 133, histidine 137, and histidine 143.

It belongs to the endoribonuclease YbeY family. It depends on Zn(2+) as a cofactor.

The protein resides in the cytoplasm. In terms of biological role, single strand-specific metallo-endoribonuclease involved in late-stage 70S ribosome quality control and in maturation of the 3' terminus of the 16S rRNA. The sequence is that of Endoribonuclease YbeY from Paracoccus denitrificans (strain Pd 1222).